The chain runs to 368 residues: Protein-glutamate methylesterase/protein-glutamine glutaminase 1 (368 aa).

Residues 4-121 enclose the Response regulatory domain; it reads KVLVVDDSGF…SRNPDKVRQL (118 aa). Residue Asp-55 is modified to 4-aspartylphosphate. The interval 138-176 is disordered; that stretch reads SLPPLPSATSSSHAPASSSSVGASARVGAGASPAPASTS. The segment covering 144 to 176 has biased composition (low complexity); sequence SATSSSHAPASSSSVGASARVGAGASPAPASTS. The region spanning 172–368 is the CheB-type methylesterase domain; that stretch reads PASTSAAPKR…IGRHLVEACQ (197 aa). Active-site residues include Ser-192, His-219, and Asp-312.

This sequence belongs to the CheB family. Post-translationally, phosphorylated by CheA. Phosphorylation of the N-terminal regulatory domain activates the methylesterase activity.

Its subcellular location is the cytoplasm. The enzyme catalyses [protein]-L-glutamate 5-O-methyl ester + H2O = L-glutamyl-[protein] + methanol + H(+). The catalysed reaction is L-glutaminyl-[protein] + H2O = L-glutamyl-[protein] + NH4(+). Its function is as follows. Involved in chemotaxis. Part of a chemotaxis signal transduction system that modulates chemotaxis in response to various stimuli. Catalyzes the demethylation of specific methylglutamate residues introduced into the chemoreceptors (methyl-accepting chemotaxis proteins or MCP) by CheR. Also mediates the irreversible deamidation of specific glutamine residues to glutamic acid. The chain is Protein-glutamate methylesterase/protein-glutamine glutaminase 1 from Pseudomonas aeruginosa (strain ATCC 15692 / DSM 22644 / CIP 104116 / JCM 14847 / LMG 12228 / 1C / PRS 101 / PAO1).